A 344-amino-acid chain; its full sequence is Methionine import ATP-binding protein MetN 1 (344 aa).

One can recognise an ABC transporter domain in the interval 2–241 (IEIRNLSQRF…PHHEVTRALI (240 aa)). 38–45 (GRSGAGKS) contributes to the ATP binding site.

This sequence belongs to the ABC transporter superfamily. Methionine importer (TC 3.A.1.24) family. As to quaternary structure, the complex is composed of two ATP-binding proteins (MetN), two transmembrane proteins (MetI) and a solute-binding protein (MetQ).

It localises to the cell inner membrane. The enzyme catalyses L-methionine(out) + ATP + H2O = L-methionine(in) + ADP + phosphate + H(+). It catalyses the reaction D-methionine(out) + ATP + H2O = D-methionine(in) + ADP + phosphate + H(+). Part of the ABC transporter complex MetNIQ involved in methionine import. Responsible for energy coupling to the transport system. This chain is Methionine import ATP-binding protein MetN 1, found in Burkholderia mallei (strain ATCC 23344).